The sequence spans 150 residues: D-aminoacyl-tRNA deacylase (150 aa).

Residues 138-139 (GP) carry the Gly-cisPro motif, important for rejection of L-amino acids motif.

It belongs to the DTD family. Homodimer.

It is found in the cytoplasm. It catalyses the reaction glycyl-tRNA(Ala) + H2O = tRNA(Ala) + glycine + H(+). The enzyme catalyses a D-aminoacyl-tRNA + H2O = a tRNA + a D-alpha-amino acid + H(+). Functionally, an aminoacyl-tRNA editing enzyme that deacylates mischarged D-aminoacyl-tRNAs. Also deacylates mischarged glycyl-tRNA(Ala), protecting cells against glycine mischarging by AlaRS. Acts via tRNA-based rather than protein-based catalysis; rejects L-amino acids rather than detecting D-amino acids in the active site. By recycling D-aminoacyl-tRNA to D-amino acids and free tRNA molecules, this enzyme counteracts the toxicity associated with the formation of D-aminoacyl-tRNA entities in vivo and helps enforce protein L-homochirality. The sequence is that of D-aminoacyl-tRNA deacylase from Phocaeicola vulgatus (strain ATCC 8482 / DSM 1447 / JCM 5826 / CCUG 4940 / NBRC 14291 / NCTC 11154) (Bacteroides vulgatus).